The chain runs to 330 residues: Transcriptional regulatory protein PHO23 (330 aa).

Residues 139–272 form a disordered region; that stretch reads EKIESKSNSK…NSNNSRISRP (134 aa). The span at 231 to 254 shows a compositional bias: polar residues; it reads TAVSPSTISTATAVNNGRIGTSTA. The span at 255–269 shows a compositional bias: low complexity; the sequence is SRGVSSVGNSNNSRI. The segment at 280-329 adopts a PHD-type zinc-finger fold; the sequence is PLYCYCNQVAYGEMVGCDGADCELEWFHLPCIGLETLPKGKWYCDDCKKK. 8 residues coordinate Zn(2+): Cys-283, Cys-285, Cys-296, Cys-301, His-307, Cys-310, Cys-323, and Cys-326.

The protein belongs to the ING family. In terms of assembly, interacts with H3K4me3 and to a lesser extent with H3K4me2. Component of the RPD3C(L) complex composed of at least ASH1, CTI6, DEP1, PHO23, RPD3, RXT2, RXT3, SAP30, SDS3, SIN3, UME1 and UME6.

It localises to the nucleus. Its function is as follows. Component of the RPD3C(L) histone deacetylase complex (HDAC) responsible for the deacetylation of lysine residues on the N-terminal part of the core histones (H2A, H2B, H3 and H4). Histone deacetylation gives a tag for epigenetic repression and plays an important role in transcriptional regulation, cell cycle progression and developmental events. The chain is Transcriptional regulatory protein PHO23 (PHO23) from Saccharomyces cerevisiae (strain ATCC 204508 / S288c) (Baker's yeast).